Consider the following 206-residue polypeptide: Emopamil-binding protein-like (206 aa).

The next 4 membrane-spanning stretches (helical) occupy residues 10-30 (EAGS…ALGL), 42-62 (WVLA…GAFV), 101-121 (LEIL…YAIV), and 165-185 (LWVY…LLLW). Residues 39 to 184 (VERWVLAWLC…LWVLIPGLLL (146 aa)) enclose the EXPERA domain.

Belongs to the EBP family. Homodimer.

The protein localises to the endoplasmic reticulum membrane. In terms of biological role, does not possess sterol isomerase activity and does not bind sigma ligands. The sequence is that of Emopamil-binding protein-like (Ebpl) from Mus musculus (Mouse).